Reading from the N-terminus, the 60-residue chain is Rubredoxin 4 (60 aa).

Positions 4 to 55 (YKLYQCAQCGFEYDEAVGWPEDGIEPGTRWDDIPEDWSCPDCGAAKSDFFMV) constitute a Rubredoxin-like domain. Fe cation contacts are provided by Cys-9, Cys-12, Cys-42, and Cys-45.

Belongs to the rubredoxin family. Requires Fe(3+) as cofactor.

Functionally, involved in the hydrocarbon hydroxylating system, which transfers electrons from NADH to rubredoxin reductase and then through rubredoxin to alkane 1 monooxygenase. In Rhodococcus sp. (strain Q15), this protein is Rubredoxin 4 (rubA4).